The sequence spans 384 residues: Sodium channel protein Nach (384 aa).

At Ala-1 to Ser-319 the chain is on the extracellular side. Residues Asn-32 and Asn-215 are each glycosylated (N-linked (GlcNAc...) asparagine). The chain crosses the membrane as a helical span at residues Leu-320–Leu-340. Residues Arg-341 to Asn-384 are Cytoplasmic-facing.

The protein belongs to the amiloride-sensitive sodium channel (TC 1.A.6) family.

The protein resides in the membrane. In terms of biological role, part of a complex that plays a role in tracheal liquid clearance. Probable role in sodium transport. In Drosophila virilis (Fruit fly), this protein is Sodium channel protein Nach (Nach).